The following is a 344-amino-acid chain: tRNA dimethylallyltransferase (344 aa).

43-50 is a binding site for ATP; sequence GPTCCGKS. A substrate-binding site is contributed by 45 to 50; sequence TCCGKS. Positions 68-71 are interaction with substrate tRNA; it reads DSMQ.

The protein belongs to the IPP transferase family. In terms of assembly, monomer. Mg(2+) serves as cofactor.

The catalysed reaction is adenosine(37) in tRNA + dimethylallyl diphosphate = N(6)-dimethylallyladenosine(37) in tRNA + diphosphate. Functionally, catalyzes the transfer of a dimethylallyl group onto the adenine at position 37 in tRNAs that read codons beginning with uridine, leading to the formation of N6-(dimethylallyl)adenosine (i(6)A). This chain is tRNA dimethylallyltransferase, found in Protochlamydia amoebophila (strain UWE25).